The chain runs to 235 residues: Phosphoribosylaminoimidazole-succinocarboxamide synthase (235 aa).

Belongs to the SAICAR synthetase family.

The catalysed reaction is 5-amino-1-(5-phospho-D-ribosyl)imidazole-4-carboxylate + L-aspartate + ATP = (2S)-2-[5-amino-1-(5-phospho-beta-D-ribosyl)imidazole-4-carboxamido]succinate + ADP + phosphate + 2 H(+). Its pathway is purine metabolism; IMP biosynthesis via de novo pathway; 5-amino-1-(5-phospho-D-ribosyl)imidazole-4-carboxamide from 5-amino-1-(5-phospho-D-ribosyl)imidazole-4-carboxylate: step 1/2. This chain is Phosphoribosylaminoimidazole-succinocarboxamide synthase, found in Lachnoclostridium phytofermentans (strain ATCC 700394 / DSM 18823 / ISDg) (Clostridium phytofermentans).